Here is a 556-residue protein sequence, read N- to C-terminus: Formate--tetrahydrofolate ligase (556 aa).

ATP is bound at residue 65–72; it reads TPAGEGKS.

This sequence belongs to the formate--tetrahydrofolate ligase family.

It carries out the reaction (6S)-5,6,7,8-tetrahydrofolate + formate + ATP = (6R)-10-formyltetrahydrofolate + ADP + phosphate. It participates in one-carbon metabolism; tetrahydrofolate interconversion. This chain is Formate--tetrahydrofolate ligase, found in Streptococcus agalactiae serotype III (strain NEM316).